A 260-amino-acid polypeptide reads, in one-letter code: Protein phosphatase 1 regulatory subunit 35 (260 aa).

The segment at 1-100 (MMGFGASALE…PLLVAGAPGD (100 aa)) is disordered. Phosphoserine is present on residues serine 46 and serine 53. Over residues 64–76 (RKGRRGGSRRGRQ) the composition is skewed to basic residues.

It belongs to the PPP1R35 family. As to quaternary structure, interacts with PPP1CA; this interaction mediates the PPP1CA phosphatase activity inhibition. Interacts with RTTN; this interaction allows the mutual recruitment to the centriole.

It localises to the cytoplasm. Its subcellular location is the cytoskeleton. The protein resides in the microtubule organizing center. It is found in the centrosome. The protein localises to the centriole. In terms of biological role, during centriole duplication, plays a role in the centriole elongation by promoting the recruitment of the microtubule-binding elongation machinery through its interaction with TTTN, leading to the centriole to centrosome conversion. In addition may play a role in the primary cilia assembly. The sequence is that of Protein phosphatase 1 regulatory subunit 35 from Mus musculus (Mouse).